Consider the following 485-residue polypeptide: Expansin-like protein 8 (485 aa).

The N-terminal stretch at 1–21 (MRISIILLSLLFLSLHSLIKA) is a signal peptide. Residues 22–464 (DITKLSVCGS…QSGHHASSNT (443 aa)) lie on the Extracellular side of the membrane. In terms of domain architecture, Expansin-like EG45 spans 26-139 (LSVCGSARAV…QIVSCGYSGN (114 aa)). 2 disulfides stabilise this stretch: C29–C70 and C73–C134. N117 and N365 each carry an N-linked (GlcNAc...) asparagine glycan. The interval 408–436 (EVNNKPSTTSGTGTTSSKPSSSSGGVSGG) is disordered. Over residues 414-431 (STTSGTGTTSSKPSSSSG) the composition is skewed to low complexity. N-linked (GlcNAc...) asparagine glycosylation occurs at N454. The helical transmembrane segment at 465-485 (NILLPTTFVFFISITILSLLF) threads the bilayer.

The protein belongs to the expansin family. Expansin A subfamily.

The protein resides in the membrane. May serve to lubricate the movement of the cellulose microfibrils during cell growth and wall extension and/or may serve to maintain the fluid state of the slug cell wall. In Dictyostelium discoideum (Social amoeba), this protein is Expansin-like protein 8 (expl8).